Reading from the N-terminus, the 153-residue chain is Small ribosomal subunit protein uS13 (153 aa).

Residues 129 to 153 (RGQRTKSTFRHGSSVGVSRTRPTGN) form a disordered region. Positions 143–153 (VGVSRTRPTGN) are enriched in polar residues.

The protein belongs to the universal ribosomal protein uS13 family. In terms of assembly, part of the 30S ribosomal subunit. Forms a loose heterodimer with protein S19. Forms two bridges to the 50S subunit in the 70S ribosome.

Its function is as follows. Located at the top of the head of the 30S subunit, it contacts several helices of the 16S rRNA. In the 70S ribosome it contacts the 23S rRNA (bridge B1a) and protein L5 of the 50S subunit (bridge B1b), connecting the 2 subunits; these bridges are implicated in subunit movement. The protein is Small ribosomal subunit protein uS13 of Methanosphaera stadtmanae (strain ATCC 43021 / DSM 3091 / JCM 11832 / MCB-3).